A 537-amino-acid chain; its full sequence is O-phosphoserine--tRNA(Cys) ligase (537 aa).

Residues 186–188 (HMT), 231–233 (SAS), 273–274 (YY), and Asn317 contribute to the substrate site.

It belongs to the class-II aminoacyl-tRNA synthetase family. O-phosphoseryl-tRNA(Cys) synthetase subfamily. Homotetramer. Interacts with SepCysS.

It catalyses the reaction tRNA(Cys) + O-phospho-L-serine + ATP = O-phospho-L-seryl-tRNA(Cys) + AMP + diphosphate. Its function is as follows. Catalyzes the attachment of O-phosphoserine (Sep) to tRNA(Cys). The protein is O-phosphoserine--tRNA(Cys) ligase of Methanococcus maripaludis (strain DSM 14266 / JCM 13030 / NBRC 101832 / S2 / LL).